Consider the following 476-residue polypeptide: Salicylate biosynthesis isochorismate synthase (476 aa).

The interval 181–202 (RRRPSGPTAGAQGDASAQERRQ) is disordered.

Belongs to the isochorismate synthase family.

The enzyme catalyses chorismate = isochorismate. Its pathway is siderophore biosynthesis; salicylate biosynthesis. Involved in the conversion of chorismate to salicylate. The polypeptide is Salicylate biosynthesis isochorismate synthase (pchA) (Pseudomonas aeruginosa (strain ATCC 15692 / DSM 22644 / CIP 104116 / JCM 14847 / LMG 12228 / 1C / PRS 101 / PAO1)).